The chain runs to 286 residues: Prepilin leader peptidase/N-methyltransferase (286 aa).

The helical transmembrane segment at F10–I30 threads the bilayer. C70, C73, C95, and C98 together coordinate Zn(2+). The next 6 membrane-spanning stretches (helical) occupy residues I102–W122, W126–I146, M157–L177, V181–L201, I224–V244, and G250–N270.

The protein belongs to the peptidase A24 family. The cofactor is Zn(2+).

The protein localises to the cell inner membrane. The enzyme catalyses Typically cleaves a -Gly-|-Phe- bond to release an N-terminal, basic peptide of 5-8 residues from type IV prepilin, and then N-methylates the new N-terminal amino group, the methyl donor being S-adenosyl-L-methionine.. In terms of biological role, plays an essential role in type IV pili and type II pseudopili formation by proteolytically removing the leader sequence from substrate proteins and subsequently monomethylating the alpha-amino group of the newly exposed N-terminal phenylalanine. The polypeptide is Prepilin leader peptidase/N-methyltransferase (pilD) (Neisseria gonorrhoeae).